We begin with the raw amino-acid sequence, 133 residues long: Small ribosomal subunit protein uS12 (133 aa).

At aspartate 89 the chain carries 3-methylthioaspartic acid. Residues 103–133 (DTAGVAGRTQRRSKYGAKRPKPGQAAPAKKK) form a disordered region. Residues 111-123 (TQRRSKYGAKRPK) show a composition bias toward basic residues. Residues 124 to 133 (PGQAAPAKKK) are compositionally biased toward low complexity.

It belongs to the universal ribosomal protein uS12 family. Part of the 30S ribosomal subunit. Contacts proteins S8 and S17. May interact with IF1 in the 30S initiation complex.

Functionally, with S4 and S5 plays an important role in translational accuracy. In terms of biological role, interacts with and stabilizes bases of the 16S rRNA that are involved in tRNA selection in the A site and with the mRNA backbone. Located at the interface of the 30S and 50S subunits, it traverses the body of the 30S subunit contacting proteins on the other side and probably holding the rRNA structure together. The combined cluster of proteins S8, S12 and S17 appears to hold together the shoulder and platform of the 30S subunit. The protein is Small ribosomal subunit protein uS12 of Bacteroides thetaiotaomicron (strain ATCC 29148 / DSM 2079 / JCM 5827 / CCUG 10774 / NCTC 10582 / VPI-5482 / E50).